Consider the following 90-residue polypeptide: Acylphosphatase (90 aa).

Residues 4–90 (CVRVRVSGRV…KGHDDFKIIY (87 aa)) form the Acylphosphatase-like domain. Catalysis depends on residues R19 and N37.

Belongs to the acylphosphatase family.

It carries out the reaction an acyl phosphate + H2O = a carboxylate + phosphate + H(+). This Methanothrix thermoacetophila (strain DSM 6194 / JCM 14653 / NBRC 101360 / PT) (Methanosaeta thermophila) protein is Acylphosphatase (acyP).